The sequence spans 206 residues: Ras-related protein Rab7 (206 aa).

GTP is bound by residues 15-22 (GDTGVGKT), 63-67 (DTAGQ), and 125-128 (NKID). S-geranylgeranyl cysteine attachment occurs at residues Cys-204 and Cys-206. Cys-206 is subject to Cysteine methyl ester.

The protein belongs to the small GTPase superfamily. Rab family.

It is found in the cell membrane. Protein transport. Probably involved in vesicular traffic. The protein is Ras-related protein Rab7 of Vigna aconitifolia (Moth bean).